We begin with the raw amino-acid sequence, 222 residues long: Small ribosomal subunit protein uS2 (222 aa).

It belongs to the universal ribosomal protein uS2 family.

This chain is Small ribosomal subunit protein uS2, found in Karelsulcia muelleri (strain GWSS) (Sulcia muelleri).